A 249-amino-acid polypeptide reads, in one-letter code: Probable transcriptional regulatory protein Meso_3192 (249 aa).

It belongs to the TACO1 family.

The protein localises to the cytoplasm. The protein is Probable transcriptional regulatory protein Meso_3192 of Chelativorans sp. (strain BNC1).